A 317-amino-acid chain; its full sequence is Transcriptional regulator LsrR (317 aa).

The H-T-H motif DNA-binding region spans 33–56 (QSEISDRLGLTRLKVSRLLEKGHQ).

Belongs to the SorC transcriptional regulatory family.

The protein resides in the cytoplasm. With respect to regulation, inactivated by phosphorylated autoinducer-2 (phospho-AI-2). Phospho-AI-2 acts by binding to LsrR, which is then unable to bind to the promoter regions, allowing the transcription of the target genes. Functionally, transcriptional regulator that represses the expression of the lsr operon in the absence of the quorum-sensing signaling molecule autoinducer 2 (AI-2). It also represses the expression of the lsrRK operon. Acts by binding directly to the lsrA and lsrR promoter regions. In the presence of phosphorylated autoinducer-2 (phospho-AI-2), LsrR is inactivated, leading to the transcription of the genes. The chain is Transcriptional regulator LsrR (lsrR) from Escherichia coli O157:H7.